The chain runs to 122 residues: U19-hexatoxin-Hi1a (122 aa).

An N-terminal signal peptide occupies residues 1–18 (MNTMIGFIVLLVSATVLG). Residues 19–80 (DPELDALRKE…YENSNFREKR (62 aa)) constitute a propeptide that is removed on maturation. Disulfide bonds link cysteine 81–cysteine 96, cysteine 88–cysteine 101, and cysteine 95–cysteine 116.

In terms of tissue distribution, expressed by the venom gland.

Its subcellular location is the secreted. Its function is as follows. Probable ion channel inhibitor. The polypeptide is U19-hexatoxin-Hi1a (Hadronyche infensa (Fraser island funnel-web spider)).